The primary structure comprises 89 residues: Toxin To14 (89 aa).

The signal sequence occupies residues 1 to 19; it reads MNCLMLIFVVFLLAFGVEC. Residues 21–85 form the LCN-type CS-alpha/beta domain; sequence KDDYPVDTAK…SPTKTSGRCN (65 aa). 4 disulfides stabilise this stretch: cysteine 33–cysteine 84, cysteine 37–cysteine 60, cysteine 46–cysteine 67, and cysteine 50–cysteine 69.

In terms of tissue distribution, expressed by the venom gland.

The protein localises to the secreted. Its function is as follows. Inhibits voltage-gated sodium channels (Nav). The chain is Toxin To14 from Tityus obscurus (Amazonian scorpion).